A 522-amino-acid polypeptide reads, in one-letter code: Glucose-1-phosphate adenylyltransferase large subunit 1, chloroplastic (522 aa).

The N-terminal 54 residues, 1–54, are a transit peptide targeting the chloroplast; sequence MVVSADCRISLSAPSCIRSSSTGLTRHIKLGSFCNGELMGKKLNLSQLPNIRLR. S428 carries the post-translational modification Phosphoserine.

This sequence belongs to the bacterial/plant glucose-1-phosphate adenylyltransferase family. As to quaternary structure, heterotetramer. As to expression, leaves.

It is found in the plastid. The protein resides in the chloroplast. The enzyme catalyses alpha-D-glucose 1-phosphate + ATP + H(+) = ADP-alpha-D-glucose + diphosphate. It functions in the pathway glycan biosynthesis; starch biosynthesis. Activated by 3'phosphoglycerate, inhibited by orthophosphate. Allosteric regulation. This protein plays a role in synthesis of starch. It catalyzes the synthesis of the activated glycosyl donor, ADP-glucose from Glc-1-P and ATP. This chain is Glucose-1-phosphate adenylyltransferase large subunit 1, chloroplastic (ADG2), found in Arabidopsis thaliana (Mouse-ear cress).